Here is a 430-residue protein sequence, read N- to C-terminus: ATP-dependent RNA helicase RhlB (430 aa).

Residues 9 to 37 carry the Q motif motif; sequence QKFSDFALHPQVIEALESKGFHNCTPIQA. In terms of domain architecture, Helicase ATP-binding spans 40 to 219; it reads LPLALSGRDV…FEQMNNAEYV (180 aa). Position 53–60 (53–60) interacts with ATP; that stretch reads AQTGTGKT. Positions 165-168 match the DEAD box motif; sequence DEAD. Positions 245 to 390 constitute a Helicase C-terminal domain; it reads RLLQTLLEEE…VSKYNSDALM (146 aa). The disordered stretch occupies residues 392-430; sequence DLPAPKRLTRPPRSNNGPRRHNNAPRRSGAPRNNRKRAD.

It belongs to the DEAD box helicase family. RhlB subfamily. In terms of assembly, component of the RNA degradosome, which is a multiprotein complex involved in RNA processing and mRNA degradation.

It localises to the cytoplasm. The catalysed reaction is ATP + H2O = ADP + phosphate + H(+). Functionally, DEAD-box RNA helicase involved in RNA degradation. Has RNA-dependent ATPase activity and unwinds double-stranded RNA. The chain is ATP-dependent RNA helicase RhlB from Pectobacterium carotovorum subsp. carotovorum (strain PC1).